Reading from the N-terminus, the 481-residue chain is RAC-alpha serine/threonine-protein kinase (481 aa).

The PH domain occupies 5–108 (AIVKEGWLHK…WIQVIQHVAD (104 aa)). A disordered region spans residues 120–141 (VRSGDSPSDNSGAEEMEVSHSK). 2 O-linked (GlcNAc) serine glycosylation sites follow: Ser-127 and Ser-130. Residues 151–409 (FEYLKLLGKG…AKEIMQHKFF (259 aa)) form the Protein kinase domain. Residues 157–165 (LGKGTFGKV) and Lys-180 contribute to the ATP site. The Proton acceptor role is filled by Asp-275. O-linked (GlcNAc) threonine glycosylation occurs at Thr-306. Thr-309 carries the phosphothreonine; by PDPK1 modification. Thr-313 carries O-linked (GlcNAc) threonine glycosylation. In terms of domain architecture, AGC-kinase C-terminal spans 410-481 (AGIVWQDVYE…QFSYSASGNA (72 aa)). Ser-474 carries the phosphoserine modification. Ser-474 is a glycosylation site (O-linked (GlcNAc) serine; alternate). Tyr-475 is subject to Phosphotyrosine.

It belongs to the protein kinase superfamily. AGC Ser/Thr protein kinase family. RAC subfamily. In terms of processing, cleavage by caspase-3/CASP3. Cleaved at the caspase-3 consensus site Asp-463 during apoptosis, resulting in down-regulation of the AKT signaling pathway and decreased cell survival. Phosphorylation on Thr-309 and Ser-474 is required for full activity. Phosphorylation of the activation loop at Thr-309 by PDPK1/PDK1 is a prerequisite for full activation. Phosphorylation by mTORC2 at Ser-474 in response to growth factors plays a key role in AKT1 activation by facilitating subsequent phosphorylation of the activation loop by PDPK1/PDK1. In terms of tissue distribution, expressed in the oocyte.

It localises to the cytoplasm. The protein resides in the nucleus. It carries out the reaction L-seryl-[protein] + ATP = O-phospho-L-seryl-[protein] + ADP + H(+). It catalyses the reaction L-threonyl-[protein] + ATP = O-phospho-L-threonyl-[protein] + ADP + H(+). Its activity is regulated as follows. Activated in response to insulin. Three specific sites, one in the kinase domain (Thr-309) and the two other ones in the C-terminal regulatory region (Ser-474 and Tyr-475), need to be phosphorylated for its full activation. Its function is as follows. AKT1 is one of several closely related serine/threonine-protein kinases known as the AKT kinase, and which regulate many processes including metabolism, proliferation, cell survival, growth and angiogenesis. This is mediated through serine and/or threonine phosphorylation of a range of downstream substrates. Over 100 substrate candidates have been reported so far, but for most of them, no isoform specificity has been reported. Signals downstream of phosphatidylinositol 3-kinase (PI(3)K) to mediate the effects of various growth factors such as platelet-derived growth factor (PDGF), epidermal growth factor (EGF), insulin and insulin-like growth factor 1 (IGF1). Plays a role as a key modulator of the AKT-mTOR signaling pathway controlling the tempo of the process of newborn neurons integration during adult neurogenesis, including correct neuron positioning, dendritic development and synapse formation. Plays a role in glucose transport by mediating insulin-induced translocation of the GLUT4 glucose transporter to the cell surface. Mediates the antiapoptotic effects of IGF1. Mediates insulin-stimulated protein synthesis, partly by playing a role in both insulin-induced phosphorylation of 4E-BP1 and in insulin-induced activation of p70 S6 kinase. Promotes glycogen synthesis by mediating the insulin-induced activation of glycogen synthase. Required for insulin-stimulated meiotic reinitiation during oocyte maturation. May be involved in the regulation of vesicular functions such as preciliary trafficking and endocytic recycling. The protein is RAC-alpha serine/threonine-protein kinase of Xenopus laevis (African clawed frog).